Reading from the N-terminus, the 38-residue chain is Photosystem II reaction center protein L (38 aa).

A helical transmembrane segment spans residues 17-37 (SLFWGLLLIFVLAVLFSSYFF).

It belongs to the PsbL family. In terms of assembly, PSII is composed of 1 copy each of membrane proteins PsbA, PsbB, PsbC, PsbD, PsbE, PsbF, PsbH, PsbI, PsbJ, PsbK, PsbL, PsbM, PsbT, PsbX, PsbY, PsbZ, Psb30/Ycf12, at least 3 peripheral proteins of the oxygen-evolving complex and a large number of cofactors. It forms dimeric complexes.

The protein localises to the plastid. Its subcellular location is the chloroplast thylakoid membrane. Functionally, one of the components of the core complex of photosystem II (PSII). PSII is a light-driven water:plastoquinone oxidoreductase that uses light energy to abstract electrons from H(2)O, generating O(2) and a proton gradient subsequently used for ATP formation. It consists of a core antenna complex that captures photons, and an electron transfer chain that converts photonic excitation into a charge separation. This subunit is found at the monomer-monomer interface and is required for correct PSII assembly and/or dimerization. The polypeptide is Photosystem II reaction center protein L (Porphyra purpurea (Red seaweed)).